Consider the following 450-residue polypeptide: Bifunctional protein GlmU (450 aa).

The pyrophosphorylase stretch occupies residues 1-228 (MKTALVILAA…ESETLGINSR (228 aa)). UDP-N-acetyl-alpha-D-glucosamine-binding positions include 8–11 (LAAG), K22, Q75, and 80–81 (GT). D105 contacts Mg(2+). G140, E154, N169, and N226 together coordinate UDP-N-acetyl-alpha-D-glucosamine. Residue N226 participates in Mg(2+) binding. The segment at 229–249 (TELSAAEAAFQERARTNAFEN) is linker. Positions 250-450 (GVTLPAPGTV…AKKAKQQRGS (201 aa)) are N-acetyltransferase. Residues R315 and K333 each coordinate UDP-N-acetyl-alpha-D-glucosamine. The active-site Proton acceptor is the H345. The UDP-N-acetyl-alpha-D-glucosamine site is built by Y348 and N359. Residues A362, 368–369 (NY), S387, S405, and R422 each bind acetyl-CoA.

The protein in the N-terminal section; belongs to the N-acetylglucosamine-1-phosphate uridyltransferase family. In the C-terminal section; belongs to the transferase hexapeptide repeat family. Homotrimer. It depends on Mg(2+) as a cofactor.

Its subcellular location is the cytoplasm. The catalysed reaction is alpha-D-glucosamine 1-phosphate + acetyl-CoA = N-acetyl-alpha-D-glucosamine 1-phosphate + CoA + H(+). The enzyme catalyses N-acetyl-alpha-D-glucosamine 1-phosphate + UTP + H(+) = UDP-N-acetyl-alpha-D-glucosamine + diphosphate. Its pathway is nucleotide-sugar biosynthesis; UDP-N-acetyl-alpha-D-glucosamine biosynthesis; N-acetyl-alpha-D-glucosamine 1-phosphate from alpha-D-glucosamine 6-phosphate (route II): step 2/2. It functions in the pathway nucleotide-sugar biosynthesis; UDP-N-acetyl-alpha-D-glucosamine biosynthesis; UDP-N-acetyl-alpha-D-glucosamine from N-acetyl-alpha-D-glucosamine 1-phosphate: step 1/1. It participates in bacterial outer membrane biogenesis; LPS lipid A biosynthesis. Its function is as follows. Catalyzes the last two sequential reactions in the de novo biosynthetic pathway for UDP-N-acetylglucosamine (UDP-GlcNAc). The C-terminal domain catalyzes the transfer of acetyl group from acetyl coenzyme A to glucosamine-1-phosphate (GlcN-1-P) to produce N-acetylglucosamine-1-phosphate (GlcNAc-1-P), which is converted into UDP-GlcNAc by the transfer of uridine 5-monophosphate (from uridine 5-triphosphate), a reaction catalyzed by the N-terminal domain. The protein is Bifunctional protein GlmU of Roseobacter denitrificans (strain ATCC 33942 / OCh 114) (Erythrobacter sp. (strain OCh 114)).